The sequence spans 171 residues: UPF0398 protein SPy_1647/M5005_Spy1353 (171 aa).

This sequence belongs to the UPF0398 family.

The sequence is that of UPF0398 protein SPy_1647/M5005_Spy1353 from Streptococcus pyogenes serotype M1.